A 1194-amino-acid polypeptide reads, in one-letter code: MARLRDSRSPSPAGSLSARKRKDDDRRDRDRRDGPVDHRRRSRSPIDRRYRDRDRDRGRDGRDRDSYRRRDRSIDRRDDDYYRGSRRDGDRRRSRDRGLDRLRSPDRRRDRSRDPDREYRPRRDDSRDRARVRREGTAESSSHRRDDVRARDQPKPGNTTAKENEPAKSTPTQPQTEAEKKAERLRKLQAMKQKHALKEAKEADVTAGLTRKLFMEMDQRASGAVVGSGTNSPAPASPAAAESPASPAPYVGKFDPKAIARNAKPARASSPVRLGDVKLGDVKVGAPVAAAASIAGQGKGAASGKAGLLQTGRPISTFGFNKSADALKTTAKRKIDMGDEEIIKRKLVKLPDLALENADDTPYADDDVAEDAEKDFDVLLAGTEEDRAEAQRLLRERREEQIQKESMAMEIDSAPSNIEVATEPVAQNPTAMDVDDEVDPLDAFMAGLEQTASGEESHSKADTLTEKKNGNIPPEAYFSDDDYGYEADGTDPTSILAMASKKKKKDIPTIDYSKLDLNPIRKNFWVEPYELSHMSEEELAELRLELDGIKVSGKNIPKPVQKWSQCGLTRPILDTIESLGFEKPTPIQMQALPVIMSGRDVIGVAKTGSGKTMAFALPMLRHVKDQDPVTGDDGAIALIMTPTRELCTQIYSDLQPFAKALKLRVVAAYGGNAIKDQIAELKRGAEIIVATPGRLIDLLAANGGRVTNLKRATYLVLDEADRMFDMGFEPQVMKIFNNVRPDRQTILFSATMPRIIDALTKKVLRDPVEITVGGRSVVAPEITQIVEVMDEGKKFNRLLELLGELYADDDDVRSLIFVERQEKADDLLRELLRRGYGCMSIHGGKDQEDRNSTISDFKKGVCPILIATSIAARGLDVKQLKLVINYDAPNHLEDYVHRAGRTGRAGNTGTAVTFITEEQENCASGIAKALEQSGQPVPDRLNEMRKAWKEKVKAGKAKDASGFGGKGLEKLDKDREAARMRERKTHKAEGEEDDVKEDAPAEDGEKKDKTKVAIQSAVSAIVSRDASKAETEDKHAIPAGAVKAGHHASSGKSGGALDKAASAISEINARLARAGQLRPGQPIDNKGPDAGAFHATLEINDFPQKARWAVTNRTNVAKILEATGTSITTKGNYYAPGKEPGPGQEPKLYILIEGDTEVVVGNALSELTRLLREGTMAAADAESRAPASGRYTIT.

Disordered regions lie at residues 1–201 (MARL…KEAK), 224–248 (AVVG…ASPA), and 452–484 (ASGE…DDYG). Composition is skewed to basic and acidic residues over residues 21–37 (RKDD…GPVD) and 44–154 (SPID…RDQP). The segment covering 156-176 (PGNTTAKENEPAKSTPTQPQT) has biased composition (polar residues). Residues 177 to 186 (EAEKKAERLR) are compositionally biased toward basic and acidic residues. The span at 232-248 (SPAPASPAAAESPASPA) shows a compositional bias: low complexity. Basic and acidic residues predominate over residues 455–469 (EESHSKADTLTEKKN). The short motif at 561 to 589 (QKWSQCGLTRPILDTIESLGFEKPTPIQM) is the Q motif element. Positions 592 to 770 (LPVIMSGRDV…KKVLRDPVEI (179 aa)) constitute a Helicase ATP-binding domain. An ATP-binding site is contributed by 605-612 (AKTGSGKT). The DEAD box motif lies at 718-721 (DEAD). The Helicase C-terminal domain occupies 797–945 (RLLELLGELY…PVPDRLNEMR (149 aa)). 2 disordered regions span residues 952–1011 (VKAG…DKTK) and 1025–1056 (DASK…SGGA). Composition is skewed to basic and acidic residues over residues 967–980 (GLEK…AARM), 997–1011 (EDAP…DKTK), and 1025–1036 (DASKAETEDKHA).

Belongs to the DEAD box helicase family. DDX46/PRP5 subfamily.

The protein resides in the nucleus. The enzyme catalyses ATP + H2O = ADP + phosphate + H(+). In terms of biological role, ATP-dependent RNA helicase involved spliceosome assembly and in nuclear splicing. Catalyzes an ATP-dependent conformational change of U2 snRNP. Bridges U1 and U2 snRNPs and enables stable U2 snRNP association with intron RNA. The polypeptide is Pre-mRNA-processing ATP-dependent RNA helicase prp-5 (prp-5) (Neurospora crassa (strain ATCC 24698 / 74-OR23-1A / CBS 708.71 / DSM 1257 / FGSC 987)).